A 284-amino-acid polypeptide reads, in one-letter code: L-ribulose-5-phosphate 3-epimerase UlaE (284 aa).

Belongs to the L-ribulose-5-phosphate 3-epimerase family.

The enzyme catalyses L-ribulose 5-phosphate = L-xylulose 5-phosphate. The protein operates within cofactor degradation; L-ascorbate degradation; D-xylulose 5-phosphate from L-ascorbate: step 3/4. In terms of biological role, catalyzes the isomerization of L-xylulose-5-phosphate to L-ribulose-5-phosphate. Is involved in the anaerobic L-ascorbate utilization. In Escherichia coli O45:K1 (strain S88 / ExPEC), this protein is L-ribulose-5-phosphate 3-epimerase UlaE.